The following is a 79-amino-acid chain: Acyl carrier protein (79 aa).

The 76-residue stretch at 2-77 (SDIEARVRKI…HAIDYIKSNA (76 aa)) folds into the Carrier domain. The residue at position 37 (S37) is an O-(pantetheine 4'-phosphoryl)serine.

It belongs to the acyl carrier protein (ACP) family. Post-translationally, 4'-phosphopantetheine is transferred from CoA to a specific serine of apo-ACP by AcpS. This modification is essential for activity because fatty acids are bound in thioester linkage to the sulfhydryl of the prosthetic group.

It is found in the cytoplasm. The protein operates within lipid metabolism; fatty acid biosynthesis. In terms of biological role, carrier of the growing fatty acid chain in fatty acid biosynthesis. This Xylella fastidiosa (strain M23) protein is Acyl carrier protein.